The following is a 566-amino-acid chain: Proline--tRNA ligase (566 aa).

It belongs to the class-II aminoacyl-tRNA synthetase family. ProS type 1 subfamily. Homodimer.

The protein resides in the cytoplasm. It catalyses the reaction tRNA(Pro) + L-proline + ATP = L-prolyl-tRNA(Pro) + AMP + diphosphate. Functionally, catalyzes the attachment of proline to tRNA(Pro) in a two-step reaction: proline is first activated by ATP to form Pro-AMP and then transferred to the acceptor end of tRNA(Pro). As ProRS can inadvertently accommodate and process non-cognate amino acids such as alanine and cysteine, to avoid such errors it has two additional distinct editing activities against alanine. One activity is designated as 'pretransfer' editing and involves the tRNA(Pro)-independent hydrolysis of activated Ala-AMP. The other activity is designated 'posttransfer' editing and involves deacylation of mischarged Ala-tRNA(Pro). The misacylated Cys-tRNA(Pro) is not edited by ProRS. This is Proline--tRNA ligase from Coxiella burnetii (strain RSA 493 / Nine Mile phase I).